The sequence spans 287 residues: ATP synthase gamma chain (287 aa).

Belongs to the ATPase gamma chain family. F-type ATPases have 2 components, CF(1) - the catalytic core - and CF(0) - the membrane proton channel. CF(1) has five subunits: alpha(3), beta(3), gamma(1), delta(1), epsilon(1). CF(0) has three main subunits: a, b and c.

Its subcellular location is the cell membrane. In terms of biological role, produces ATP from ADP in the presence of a proton gradient across the membrane. The gamma chain is believed to be important in regulating ATPase activity and the flow of protons through the CF(0) complex. The protein is ATP synthase gamma chain of Bacillus caldotenax.